The chain runs to 314 residues: Solute carrier family 25 member 44 (314 aa).

Solcar repeat units lie at residues 18–100 (KKFY…TRKF), 107–210 (SNTV…YAEQ), and 220–302 (PHIV…LKKL). 6 helical membrane-spanning segments follow: residues 20 to 42 (FYVF…TLIR), 71 to 90 (AGLY…GQCY), 113 to 133 (LVAG…IDVV), 185 to 201 (GYVA…AVWW), 222 to 239 (IVFQ…ASIL), and 278 to 296 (LSAR…VVGY).

It belongs to the mitochondrial carrier (TC 2.A.29) family. In terms of tissue distribution, highly expressed in brown adipose tissues compared with other metabolic organs.

Its subcellular location is the mitochondrion membrane. The catalysed reaction is L-valine(in) = L-valine(out). It catalyses the reaction L-leucine(in) = L-leucine(out). Functionally, mitochondrial solute transporter which transports branched-chain amino acid (BCAA; valine, leucine and isoleucine) into mitochondria in brown adipose tissue (BAT). BAT is involved in BCAA catabolism and actively utilizes BCAA in the mitochondria for thermogenesis. In Mus musculus (Mouse), this protein is Solute carrier family 25 member 44.